A 174-amino-acid polypeptide reads, in one-letter code: Large ribosomal subunit protein uL16 (174 aa).

Belongs to the universal ribosomal protein uL16 family.

The chain is Large ribosomal subunit protein uL16 from Staphylothermus marinus (strain ATCC 43588 / DSM 3639 / JCM 9404 / F1).